The following is a 503-amino-acid chain: Maturase K (503 aa).

It belongs to the intron maturase 2 family. MatK subfamily.

It localises to the plastid. The protein resides in the chloroplast. In terms of biological role, usually encoded in the trnK tRNA gene intron. Probably assists in splicing its own and other chloroplast group II introns. The polypeptide is Maturase K (Rosa rugosa (Rugosa rose)).